An 83-amino-acid chain; its full sequence is Cytochrome b559 subunit alpha (83 aa).

Residues 21-35 form a helical membrane-spanning segment; that stretch reads VIHSITIPSLFIAGW. H23 is a binding site for heme.

Belongs to the PsbE/PsbF family. As to quaternary structure, heterodimer of an alpha subunit and a beta subunit. PSII is composed of 1 copy each of membrane proteins PsbA, PsbB, PsbC, PsbD, PsbE, PsbF, PsbH, PsbI, PsbJ, PsbK, PsbL, PsbM, PsbT, PsbX, PsbY, PsbZ, Psb30/Ycf12, at least 3 peripheral proteins of the oxygen-evolving complex and a large number of cofactors. It forms dimeric complexes. Heme b is required as a cofactor.

Its subcellular location is the plastid membrane. Functionally, this b-type cytochrome is tightly associated with the reaction center of photosystem II (PSII). PSII is a light-driven water:plastoquinone oxidoreductase that uses light energy to abstract electrons from H(2)O, generating O(2) and a proton gradient subsequently used for ATP formation. It consists of a core antenna complex that captures photons, and an electron transfer chain that converts photonic excitation into a charge separation. In Cuscuta reflexa (Southern Asian dodder), this protein is Cytochrome b559 subunit alpha.